A 143-amino-acid chain; its full sequence is Nucleoside diphosphate kinase (143 aa).

ATP-binding residues include K11, F59, R87, T93, R104, and N114. H117 acts as the Pros-phosphohistidine intermediate in catalysis.

The protein belongs to the NDK family. In terms of assembly, homotetramer. Mg(2+) is required as a cofactor.

It localises to the cytoplasm. The enzyme catalyses a 2'-deoxyribonucleoside 5'-diphosphate + ATP = a 2'-deoxyribonucleoside 5'-triphosphate + ADP. The catalysed reaction is a ribonucleoside 5'-diphosphate + ATP = a ribonucleoside 5'-triphosphate + ADP. Major role in the synthesis of nucleoside triphosphates other than ATP. The ATP gamma phosphate is transferred to the NDP beta phosphate via a ping-pong mechanism, using a phosphorylated active-site intermediate. The chain is Nucleoside diphosphate kinase from Ectopseudomonas mendocina (strain ymp) (Pseudomonas mendocina).